A 38-amino-acid polypeptide reads, in one-letter code: MNKFLTAAPVVAAIWFTATAGILIEWNRFFPDLLFHPM.

The helical transmembrane segment at 4 to 24 (FLTAAPVVAAIWFTATAGILI) threads the bilayer.

This sequence belongs to the PsaJ family.

The protein localises to the cellular thylakoid membrane. In terms of biological role, may help in the organization of the PsaE and PsaF subunits. In Synechococcus sp. (strain CC9605), this protein is Photosystem I reaction center subunit IX.